Here is a 437-residue protein sequence, read N- to C-terminus: MAISKVYARSVYDSRGNPTVEVEVTTENGTFRSIVPSGASTGVHEALELRDGDKSKWLGKGVTKAVSNVNDIIAPALLSANVDVKDQKAVDALMLTLDGTPNKSKLGANAILGVSMAVAKAAAAEKKVPLYQHLADLAGSSTTPFVLPVPFLNVLNGGSHAGGALALQEFMIAPTGAESFSEALRMGSEVYHNLKSLTKKRYGASAGNVGDEGGVAPNIQTAEEALDLIVDAIKAAGYEGKIDIALDCASSEFFKDGKYDLDFKNPESDSSKWLSGQELADLYKKLVEKYPIVSIEDPFAEDDWEAWSHFYKNAGVQIVADDLTVTNPTRIATAIQKKAADALLLKVNQIGSLTESIQAAKDSFDATWGVMVSHRSGETEDTFIADLVVGLRTGQIKTGAPARSERLAKLNQLLRIEEELGSKAIYAGKKFHNANKL.

Substrate is bound by residues His160 and Glu169. The Proton donor role is filled by Glu212. Residues Asp247, Glu296, and Asp321 each contribute to the Mg(2+) site. Substrate-binding residues include Glu296 and Asp321. Lys346 functions as the Proton acceptor in the catalytic mechanism. Residues 373–376 (SHRS) and Lys397 each bind substrate.

It belongs to the enolase family. Homodimer. Requires Mg(2+) as cofactor.

The protein resides in the cytoplasm. The enzyme catalyses (2R)-2-phosphoglycerate = phosphoenolpyruvate + H2O. Its pathway is carbohydrate degradation; glycolysis; pyruvate from D-glyceraldehyde 3-phosphate: step 4/5. In Eremothecium gossypii (strain ATCC 10895 / CBS 109.51 / FGSC 9923 / NRRL Y-1056) (Yeast), this protein is Enolase (ENO).